Reading from the N-terminus, the 381-residue chain is Chaperone protein DnaJ 1 (381 aa).

Residues 4 to 68 (DYYGLLGVSR…EKRRIVDLGG (65 aa)) form the J domain. A CR-type zinc finger spans residues 132–214 (GVTKQVTVDT…CMGDGRVRAR (83 aa)). The Zn(2+) site is built by cysteine 145, cysteine 148, cysteine 162, cysteine 165, cysteine 188, cysteine 191, cysteine 202, and cysteine 205. CXXCXGXG motif repeat units lie at residues 145–152 (CDRCHGKG), 162–169 (CDTCGGRG), 188–195 (CPTCRGVG), and 202–209 (CHQCMGDG).

The protein belongs to the DnaJ family. Homodimer. Zn(2+) is required as a cofactor.

It is found in the cytoplasm. Its function is as follows. Participates actively in the response to hyperosmotic and heat shock by preventing the aggregation of stress-denatured proteins and by disaggregating proteins, also in an autonomous, DnaK-independent fashion. Unfolded proteins bind initially to DnaJ; upon interaction with the DnaJ-bound protein, DnaK hydrolyzes its bound ATP, resulting in the formation of a stable complex. GrpE releases ADP from DnaK; ATP binding to DnaK triggers the release of the substrate protein, thus completing the reaction cycle. Several rounds of ATP-dependent interactions between DnaJ, DnaK and GrpE are required for fully efficient folding. Also involved, together with DnaK and GrpE, in the DNA replication of plasmids through activation of initiation proteins. This chain is Chaperone protein DnaJ 1, found in Mycolicibacterium paratuberculosis (strain ATCC BAA-968 / K-10) (Mycobacterium paratuberculosis).